Reading from the N-terminus, the 537-residue chain is Cytochrome P450 86A8 (537 aa).

A helical membrane pass occupies residues 3 to 23; it reads ISTALMILSAITAYFLWLTFI. Heme is bound at residue C458.

Belongs to the cytochrome P450 family. Requires heme as cofactor. Expressed in leaves, stems, flowers and siliques. Expressed at low levels in roots.

The protein localises to the membrane. It carries out the reaction an organic molecule + reduced [NADPH--hemoprotein reductase] + O2 = an alcohol + oxidized [NADPH--hemoprotein reductase] + H2O + H(+). Catalyzes the omega-hydroxylation of various fatty acids (FA). Acts on saturated and unsaturated fatty acids with chain lengths from C12 to C18. May be involved in the biosynthesis of cutin in the epidermis which prevents post-genital organ fusions. Hydroxylated FAs may be important for trichome differentiation, establishment of apical dominance and senescence. This Arabidopsis thaliana (Mouse-ear cress) protein is Cytochrome P450 86A8 (CYP86A8).